The sequence spans 1010 residues: Outer kinetochore KNL1 complex subunit knl-1 (1010 aa).

9 consecutive repeat copies span residues 85–88 (MDIS), 109–112 (MDMS), 228–231 (MDTS), 255–258 (MDIT), 278–281 (MDIS), 323–326 (MDIT), 346–349 (MDIS), 402–405 (MDIT), and 428–431 (MDIS). A 9 X 4 AA repeats of M-[D/E]-[I/L/M]-[S/T] region spans residues 85–431 (MDISESPACT…LQKEDLMDIS (347 aa)). 2 coiled-coil regions span residues 820 to 915 (RIVE…GLDK) and 956 to 988 (KALR…KFAQ).

In terms of assembly, component of the KNL1 complex composed of knl-1 and kbp-5. Part of the ten-subunit outer kinetochore KMN network that includes the KNL1, MIS12 and NDC80 complexes. Interacts with the protein phosphatase 1 (PP1) catalytic subunit gsp-1; the interaction is direct. Interacts with the protein phosphatase 1 (PP1) catalytic subunit gsp-2; the interaction is direct. Interacts with the MIS12 complex subunits kbp-1, kbp-2 and mis-12. Interacts with the NDC80 complex components ndc-80 and him-10. Interacts with knl-3. Interacts with kbp-3. Interacts with kbp-4. Interacts with kbp-5.

It localises to the cytoplasm. Its subcellular location is the cell cortex. The protein localises to the chromosome. The protein resides in the centromere. It is found in the kinetochore. Acts as a component of the outer kinetochore KNL1 complex that serves as a docking point for spindle assembly checkpoint components and mediates microtubule-kinetochore interactions. Kinetochores, consisting of a centromere-associated inner segment and a microtubule-contacting outer segment, play a crucial role in chromosome segregation by mediating the physical connection between centromeric DNA and spindle microtubules. The outer kinetochore is made up of the ten-subunit KMN network, comprising the MIS12, NDC80 and KNL1 complexes, and auxiliary microtubule-associated components; together they connect the outer kinetochore with the inner kinetochore, bind microtubules, and mediate interactions with mitotic checkpoint proteins that delay anaphase until chromosomes are bioriented on the spindle. Binds the protein phosphatase 1 catalytic subunits gsp-1 and gsp-2, which has a role in delaying formation of load-bearing kinetochore-microtubule attachments. Required for the recruitment of spindle-assembly checkpoint components bub-1 and mdf-1/2 to unattached kinetochores. Binds microtubules which plays a role in silencing of the spindle assembly checkpoint, but not the formation of load-bearing microtubule-kinetochore attachments. Has a role in the correct localization of the spindly-like protein spdl-1 and the RZZ complex that is composed of rod-1, czw-1 and zwl-1 to kinetochores. The protein is Outer kinetochore KNL1 complex subunit knl-1 (knl-1) of Caenorhabditis elegans.